A 116-amino-acid chain; its full sequence is Type IV narrow pilus major component PilA5 (116 aa).

The propeptide at 1-5 (MRAKG) is leader sequence. An N-methylphenylalanine modification is found at Phe-6. Residues 6 to 26 (FTLIELAIVIVIIGILVAIAV) form a helical membrane-spanning segment.

Glycosylated.

The protein resides in the cell inner membrane. Its subcellular location is the cell outer membrane. The protein localises to the periplasm. In terms of biological role, plays an essential role in forming the main structure of the narrow T4P pili that participates in twitching motility. The chain is Type IV narrow pilus major component PilA5 (pilA5) from Thermus thermophilus (strain ATCC BAA-163 / DSM 7039 / HB27).